The following is a 351-amino-acid chain: GTPase Obg (351 aa).

Residues 1-159 enclose the Obg domain; that stretch reads MKFLDQAKVY…RWIWLRLKLI (159 aa). An OBG-type G domain is found at 160–328; the sequence is ADVGLVGLPN…LCGSAWDIVL (169 aa). Residues 166–173, 191–195, 213–216, 280–283, and 309–311 contribute to the GTP site; these read GLPNAGKS, FTTLY, DIPG, NKID, and SGV. Mg(2+) is bound by residues serine 173 and threonine 193.

This sequence belongs to the TRAFAC class OBG-HflX-like GTPase superfamily. OBG GTPase family. As to quaternary structure, monomer. The cofactor is Mg(2+).

It localises to the cytoplasm. In terms of biological role, an essential GTPase which binds GTP, GDP and possibly (p)ppGpp with moderate affinity, with high nucleotide exchange rates and a fairly low GTP hydrolysis rate. Plays a role in control of the cell cycle, stress response, ribosome biogenesis and in those bacteria that undergo differentiation, in morphogenesis control. The polypeptide is GTPase Obg (Maricaulis maris (strain MCS10) (Caulobacter maris)).